Consider the following 463-residue polypeptide: Fumarate hydratase class II (463 aa).

Residues 98–100, 129–132, 139–141, and Thr-187 each bind substrate; these read SGT, HPND, and SSN. Residues 121 to 141 are disordered; sequence KKGGKSPVHPNDHVNKGQSSN. His-188 (proton donor/acceptor) is an active-site residue. Ser-318 is an active-site residue. Residues Ser-319 and 324 to 326 contribute to the substrate site; that span reads KVN.

It belongs to the class-II fumarase/aspartase family. Fumarase subfamily. In terms of assembly, homotetramer.

It is found in the cytoplasm. The catalysed reaction is (S)-malate = fumarate + H2O. It participates in carbohydrate metabolism; tricarboxylic acid cycle; (S)-malate from fumarate: step 1/1. In terms of biological role, involved in the TCA cycle. Catalyzes the stereospecific interconversion of fumarate to L-malate. The chain is Fumarate hydratase class II from Rickettsia conorii (strain ATCC VR-613 / Malish 7).